We begin with the raw amino-acid sequence, 76 residues long: ATP synthase subunit 9, mitochondrial (76 aa).

The residue at position 1 (methionine 1) is an N-formylmethionine. The next 2 helical transmembrane spans lie at 14-34 (LASIGLVGAGIGIAIVFAALI) and 52-72 (ILGFALSEATGLFALMIAFLL).

In terms of assembly, F-type ATP synthases have 2 components, the catalytic core F(1) and the membrane-embedded component F(0), linked together by a central stalk and a peripheral stalk. The central stalk, also called rotor shaft, is often seen as part of F(1). The peripheral stalk is seen as part of F(0). F(0) contains the membrane channel next to the rotor. F-type ATP synthases form dimers but each monomer functions independently in ATP generation. The dimer consists of 17 different polypeptides: ATP1 (subunit alpha, 3 molecules per monomer, part of F(1)), ATP2 (subunit beta, 3 copies per monomer, part of F(1)), ATP3 (subunit gamma, part of the central stalk), ATP4 (subunit b, part of the peripheral stalk), ATP5/OSCP (subunit 5/OSCP, part of the peripheral stalk), ATP6 (subunit a, part of the peripheral stalk), ATP7 (subunit d, part of the peripheral stalk), ATP8 (subunit 8, part of the peripheral stalk), OLI1 (subunit c, part of the rotor, 10 molecules per monomer), ATP14 (subunit h, part of the peripheral stalk), ATP15 (subunit epsilon, part of the central stalk), ATP16 (subunit delta, part of the central stalk), ATP17 (subunit f, part of the peripheral stalk), ATP18 (subunit i/j, part of the peripheral stalk), ATP19 (subunit k, dimer-specific, at interface between monomers), ATP20 (subunit g, at interface between monomers), TIM11 (subunit e, at interface between monomers).

The protein localises to the mitochondrion inner membrane. In terms of biological role, mitochondrial membrane ATP synthase (F(1)F(0) ATP synthase or Complex V) produces ATP from ADP in the presence of a proton gradient across the membrane which is generated by electron transport complexes of the respiratory chain. F-type ATP synthases consist of two structural domains, F(1) - containing the extramembraneous catalytic core, and F(0) - containing the membrane proton channel, linked together by a central stalk and a peripheral stalk. During catalysis, ATP synthesis in the catalytic domain of F(1) is coupled via a rotary mechanism of the central stalk subunits to proton translocation. Part of the complex F(0) domain. A homomeric c-ring of 10 OLI1/ATP9 subunits is part of the complex rotary element. The chain is ATP synthase subunit 9, mitochondrial from Yarrowia lipolytica (strain CLIB 122 / E 150) (Yeast).